The chain runs to 184 residues: UPF0149 protein PP_5201 (184 aa).

The protein belongs to the UPF0149 family.

In Pseudomonas putida (strain ATCC 47054 / DSM 6125 / CFBP 8728 / NCIMB 11950 / KT2440), this protein is UPF0149 protein PP_5201.